Reading from the N-terminus, the 682-residue chain is Nephrocystin-1-like protein (682 aa).

Positions 10 to 100 (LQDAINRFPQ…ALSPEKEQLS (91 aa)) form a coiled coil. The tract at residues 96 to 188 (KEQLSFSVSV…PLESKTLNER (93 aa)) is disordered. Positions 128-148 (NDDESEDSDNDSEIIETDVQL) are enriched in acidic residues. Positions 215 to 275 (VRGNVFVAID…PKTYLQHVKE (61 aa)) constitute an SH3 domain.

It belongs to the nephrocystin-1 family. As to expression, expressed in ciliated sensory neurons of the head (amphid neurons) and the tail in hermaphrodites (phasmid neurons) and males (sensory ray neurons).

In terms of biological role, plays a role in the extension of dendrites from phasmid ciliated sensory neurons. May be necessary for initial assembly of the cilium. This is Nephrocystin-1-like protein from Caenorhabditis elegans.